The chain runs to 298 residues: ATP phosphoribosyltransferase (298 aa).

This sequence belongs to the ATP phosphoribosyltransferase family. Long subfamily. Requires Mg(2+) as cofactor.

The protein resides in the cytoplasm. It catalyses the reaction 1-(5-phospho-beta-D-ribosyl)-ATP + diphosphate = 5-phospho-alpha-D-ribose 1-diphosphate + ATP. It functions in the pathway amino-acid biosynthesis; L-histidine biosynthesis; L-histidine from 5-phospho-alpha-D-ribose 1-diphosphate: step 1/9. Its activity is regulated as follows. Feedback inhibited by histidine. Catalyzes the condensation of ATP and 5-phosphoribose 1-diphosphate to form N'-(5'-phosphoribosyl)-ATP (PR-ATP). Has a crucial role in the pathway because the rate of histidine biosynthesis seems to be controlled primarily by regulation of HisG enzymatic activity. This Vibrio parahaemolyticus serotype O3:K6 (strain RIMD 2210633) protein is ATP phosphoribosyltransferase.